The sequence spans 254 residues: Imidazole glycerol phosphate synthase subunit HisF (254 aa).

Catalysis depends on residues D12 and D131.

It belongs to the HisA/HisF family. Heterodimer of HisH and HisF.

Its subcellular location is the cytoplasm. The catalysed reaction is 5-[(5-phospho-1-deoxy-D-ribulos-1-ylimino)methylamino]-1-(5-phospho-beta-D-ribosyl)imidazole-4-carboxamide + L-glutamine = D-erythro-1-(imidazol-4-yl)glycerol 3-phosphate + 5-amino-1-(5-phospho-beta-D-ribosyl)imidazole-4-carboxamide + L-glutamate + H(+). It participates in amino-acid biosynthesis; L-histidine biosynthesis; L-histidine from 5-phospho-alpha-D-ribose 1-diphosphate: step 5/9. In terms of biological role, IGPS catalyzes the conversion of PRFAR and glutamine to IGP, AICAR and glutamate. The HisF subunit catalyzes the cyclization activity that produces IGP and AICAR from PRFAR using the ammonia provided by the HisH subunit. This is Imidazole glycerol phosphate synthase subunit HisF from Janthinobacterium sp. (strain Marseille) (Minibacterium massiliensis).